A 313-amino-acid chain; its full sequence is tRNA pseudouridine synthase B (313 aa).

Catalysis depends on Asp-48, which acts as the Nucleophile.

This sequence belongs to the pseudouridine synthase TruB family. Type 1 subfamily.

The enzyme catalyses uridine(55) in tRNA = pseudouridine(55) in tRNA. Its function is as follows. Responsible for synthesis of pseudouridine from uracil-55 in the psi GC loop of transfer RNAs. The polypeptide is tRNA pseudouridine synthase B (Saccharophagus degradans (strain 2-40 / ATCC 43961 / DSM 17024)).